Here is a 106-residue protein sequence, read N- to C-terminus: UPF0145 protein VC_A0951 (106 aa).

It belongs to the UPF0145 family.

The protein is UPF0145 protein VC_A0951 of Vibrio cholerae serotype O1 (strain ATCC 39315 / El Tor Inaba N16961).